Here is a 170-residue protein sequence, read N- to C-terminus: Urease accessory protein UreE (170 aa).

The protein belongs to the UreE family.

It localises to the cytoplasm. Involved in urease metallocenter assembly. Binds nickel. Probably functions as a nickel donor during metallocenter assembly. This chain is Urease accessory protein UreE, found in Helicobacter pylori (strain G27).